We begin with the raw amino-acid sequence, 376 residues long: Peroxisomal membrane protein PEX27 (376 aa).

As to quaternary structure, homooligomer. Interacts with PEX25 and PEX34.

The protein resides in the peroxisome membrane. Required for regulation of peroxisome size and number. Also promotes peroxisome division and biogenesis. The sequence is that of Peroxisomal membrane protein PEX27 (PEX27) from Saccharomyces cerevisiae (strain ATCC 204508 / S288c) (Baker's yeast).